The primary structure comprises 369 residues: Putative 2-aminoethylphosphonate import ATP-binding protein PhnT (369 aa).

In terms of domain architecture, ABC transporter spans 19–250; the sequence is IVLDSLRVAY…PPNRFAAEFL (232 aa). ATP is bound at residue 51–58; sequence GPSGSGKT.

The protein belongs to the ABC transporter superfamily. 2-aminoethylphosphonate importer (TC 3.A.1.11.5) family.

It is found in the cell inner membrane. In terms of biological role, probably part of the PhnSTUV complex (TC 3.A.1.11.5) involved in 2-aminoethylphosphonate import. Probably responsible for energy coupling to the transport system. The chain is Putative 2-aminoethylphosphonate import ATP-binding protein PhnT (phnT) from Salmonella paratyphi A (strain ATCC 9150 / SARB42).